Here is a 491-residue protein sequence, read N- to C-terminus: Aspartyl/glutamyl-tRNA(Asn/Gln) amidotransferase subunit B (491 aa).

This sequence belongs to the GatB/GatE family. GatB subfamily. Heterotrimer of A, B and C subunits.

It catalyses the reaction L-glutamyl-tRNA(Gln) + L-glutamine + ATP + H2O = L-glutaminyl-tRNA(Gln) + L-glutamate + ADP + phosphate + H(+). It carries out the reaction L-aspartyl-tRNA(Asn) + L-glutamine + ATP + H2O = L-asparaginyl-tRNA(Asn) + L-glutamate + ADP + phosphate + 2 H(+). Allows the formation of correctly charged Asn-tRNA(Asn) or Gln-tRNA(Gln) through the transamidation of misacylated Asp-tRNA(Asn) or Glu-tRNA(Gln) in organisms which lack either or both of asparaginyl-tRNA or glutaminyl-tRNA synthetases. The reaction takes place in the presence of glutamine and ATP through an activated phospho-Asp-tRNA(Asn) or phospho-Glu-tRNA(Gln). This chain is Aspartyl/glutamyl-tRNA(Asn/Gln) amidotransferase subunit B, found in Burkholderia ambifaria (strain ATCC BAA-244 / DSM 16087 / CCUG 44356 / LMG 19182 / AMMD) (Burkholderia cepacia (strain AMMD)).